Consider the following 146-residue polypeptide: UPF0178 protein BcerKBAB4_2842 (146 aa).

The protein belongs to the UPF0178 family.

This Bacillus mycoides (strain KBAB4) (Bacillus weihenstephanensis) protein is UPF0178 protein BcerKBAB4_2842.